We begin with the raw amino-acid sequence, 128 residues long: Large ribosomal subunit protein bL12 (128 aa).

It belongs to the bacterial ribosomal protein bL12 family. As to quaternary structure, homodimer. Part of the ribosomal stalk of the 50S ribosomal subunit. Forms a multimeric L10(L12)X complex, where L10 forms an elongated spine to which 2 to 4 L12 dimers bind in a sequential fashion. Binds GTP-bound translation factors.

Functionally, forms part of the ribosomal stalk which helps the ribosome interact with GTP-bound translation factors. Is thus essential for accurate translation. This is Large ribosomal subunit protein bL12 from Kocuria rhizophila (strain ATCC 9341 / DSM 348 / NBRC 103217 / DC2201).